The chain runs to 515 residues: Protein DETOXIFICATION 42 (515 aa).

Topologically, residues 1-35 (MMSEDGYNTDFPRNPLYIFFSDFRSVLKFDELGLE) are cytoplasmic. The helical transmembrane segment at 36 to 56 (IARIALPAALALTADPIASLV) threads the bilayer. The Extracellular portion of the chain corresponds to 57-58 (DT). Residues 59–79 (AFIGQIGPVELAAVGVSIALF) traverse the membrane as a helical segment. At 80 to 168 (NQVSRIAIFP…AKKRNIPSAS (89 aa)) the chain is on the cytoplasmic side. The helical transmembrane segment at 169–189 (SALIIGGVLGLFQAVFLISAA) threads the bilayer. Topologically, residues 190–211 (KPLLSFMGVKHDSPMMRPSQRY) are extracellular. The helical transmembrane segment at 212–232 (LSLRSLGAPAVLLSLAAQGVF) threads the bilayer. Residues 233–242 (RGFKDTTTPL) are Cytoplasmic-facing. Residues 243 to 263 (FATVIGDVTNIILDPIFIFVF) traverse the membrane as a helical segment. The Extracellular segment spans residues 264–266 (RLG). The helical transmembrane segment at 267–287 (VTGAATAHVISQYLMCGILLW) threads the bilayer. Residues 288–312 (KLMGQVDIFNMSTKHLQFCRFMKNG) are Cytoplasmic-facing. The helical transmembrane segment at 313–333 (FLLLMRVIAVTFCVTLSASLA) threads the bilayer. Residues 334–349 (AREGSTSMAAFQVCLQ) lie on the Extracellular side of the membrane. The chain crosses the membrane as a helical span at residues 350 to 370 (VWLATSLLADGYAVAGQAILA). The Cytoplasmic portion of the chain corresponds to 371 to 390 (SAFAKKDYKRAAATASRVLQ). The helical transmembrane segment at 391–411 (LGLVLGFVLAVILGAGLHFGA) threads the bilayer. Residues 412-423 (RVFTKDDKVLHL) lie on the Extracellular side of the membrane. The chain crosses the membrane as a helical span at residues 424-444 (ISIGLPFVAGTQPINALAFVF). Residues 445-453 (DGVNFGASD) are Cytoplasmic-facing. A helical transmembrane segment spans residues 454-474 (FGYAAASLVMVAIVSILCLLF). Over 475-480 (LSSTHG) the chain is Extracellular. Residues 481–501 (FIGLWFGLTIYMSLRAAVGFW) form a helical membrane-spanning segment. At 502–515 (RIGTGTGPWSFLRS) the chain is on the cytoplasmic side.

It belongs to the multi antimicrobial extrusion (MATE) (TC 2.A.66.1) family. Expressed in roots, but not in shoots. Detected in the mature regions of the root, extending from above the root-hair region to the root-shoot junction.

The protein localises to the cell membrane. Citrate transporter critical for aluminum tolerance. Responsible for citrate exudation into the rhizosphere to protect roots from aluminum toxicity. This is Protein DETOXIFICATION 42 from Arabidopsis thaliana (Mouse-ear cress).